Here is a 263-residue protein sequence, read N- to C-terminus: 4-hydroxy-tetrahydrodipicolinate reductase (263 aa).

NAD(+) contacts are provided by residues 7-12, 96-98, and 122-125; these read GFKGRM, GTT, and APNF. Residue H152 is the Proton donor/acceptor of the active site. A (S)-2,3,4,5-tetrahydrodipicolinate-binding site is contributed by H153. The active-site Proton donor is the K156. (S)-2,3,4,5-tetrahydrodipicolinate is bound at residue 162–163; it reads GT.

The protein belongs to the DapB family.

It is found in the cytoplasm. The enzyme catalyses (S)-2,3,4,5-tetrahydrodipicolinate + NAD(+) + H2O = (2S,4S)-4-hydroxy-2,3,4,5-tetrahydrodipicolinate + NADH + H(+). It carries out the reaction (S)-2,3,4,5-tetrahydrodipicolinate + NADP(+) + H2O = (2S,4S)-4-hydroxy-2,3,4,5-tetrahydrodipicolinate + NADPH + H(+). Its pathway is amino-acid biosynthesis; L-lysine biosynthesis via DAP pathway; (S)-tetrahydrodipicolinate from L-aspartate: step 4/4. Functionally, catalyzes the conversion of 4-hydroxy-tetrahydrodipicolinate (HTPA) to tetrahydrodipicolinate. The sequence is that of 4-hydroxy-tetrahydrodipicolinate reductase from Listeria monocytogenes serovar 1/2a (strain ATCC BAA-679 / EGD-e).